Here is a 424-residue protein sequence, read N- to C-terminus: Gamma-glutamyl phosphate reductase (424 aa).

It belongs to the gamma-glutamyl phosphate reductase family.

The protein resides in the cytoplasm. It carries out the reaction L-glutamate 5-semialdehyde + phosphate + NADP(+) = L-glutamyl 5-phosphate + NADPH + H(+). Its pathway is amino-acid biosynthesis; L-proline biosynthesis; L-glutamate 5-semialdehyde from L-glutamate: step 2/2. In terms of biological role, catalyzes the NADPH-dependent reduction of L-glutamate 5-phosphate into L-glutamate 5-semialdehyde and phosphate. The product spontaneously undergoes cyclization to form 1-pyrroline-5-carboxylate. This chain is Gamma-glutamyl phosphate reductase, found in Halorhodospira halophila (strain DSM 244 / SL1) (Ectothiorhodospira halophila (strain DSM 244 / SL1)).